Consider the following 505-residue polypeptide: MGKWWFNSIEGLEHRCGLSKSMDSLGYLIGNTSGSEDPTLNDTNKNIPSWGHSGSYSCNNVDHFFSVRDIWSFISDGTFLVRDNNGNCYSVYLDIENQVFEIDNDSSFLSELESSFSSYMNSSYLNSGSKSDNRYYDRYTYDIKYSWNNHINSCIDSYLRSEINIDSYISSGSDNYRDSYIYSYICSGESVSNSKSGSSSIRTGGNSSDFNRRGRSNDFDLNKKYRHLWVQCENCYGLNYKKFVSFKMHICEQCGYHLKMSSSERIELSIDSGTWDPMDEDMVSMDPIQFHSEEEPYRDRIDSYQRKTGLTEAVQTGIGQLNGIPVAIGVMDFQFMGGSMGSVVGEKITRLIEYATNRSLPVIMVCASGGARMQEGSLSLMQMAKISSASYDYQLNKKLFYVSILTSPTTGGVTASFGMLGDIIIAEPNAYIAFAGKRVIEQTLNKTVPDGSQAAEYSFHKGLFDPIVPRNPLKGVLNELFRLHGFFPLNQNSSRALGSVICSEL.

A compositionally biased stretch (low complexity) spans 189-205 (ESVSNSKSGSSSIRTGG). The interval 189 to 213 (ESVSNSKSGSSSIRTGGNSSDFNRR) is disordered. Positions 228–499 (LWVQCENCYG…NQNSSRALGS (272 aa)) constitute a CoA carboxyltransferase N-terminal domain. Zn(2+) is bound by residues Cys232, Cys235, Cys251, and Cys254. Residues 232–254 (CENCYGLNYKKFVSFKMHICEQC) form a C4-type zinc finger.

Belongs to the AccD/PCCB family. Acetyl-CoA carboxylase is a heterohexamer composed of biotin carboxyl carrier protein, biotin carboxylase and 2 subunits each of ACCase subunit alpha and ACCase plastid-coded subunit beta (accD). Requires Zn(2+) as cofactor.

The protein resides in the plastid. It localises to the chloroplast stroma. The catalysed reaction is N(6)-carboxybiotinyl-L-lysyl-[protein] + acetyl-CoA = N(6)-biotinyl-L-lysyl-[protein] + malonyl-CoA. It participates in lipid metabolism; malonyl-CoA biosynthesis; malonyl-CoA from acetyl-CoA: step 1/1. Functionally, component of the acetyl coenzyme A carboxylase (ACC) complex. Biotin carboxylase (BC) catalyzes the carboxylation of biotin on its carrier protein (BCCP) and then the CO(2) group is transferred by the transcarboxylase to acetyl-CoA to form malonyl-CoA. The protein is Acetyl-coenzyme A carboxylase carboxyl transferase subunit beta, chloroplastic of Calycanthus floridus var. glaucus (Eastern sweetshrub).